The primary structure comprises 787 residues: Vacuolar protein sorting-associated protein 35A (787 aa).

The residue at position 1 (Met1) is an N-acetylmethionine.

This sequence belongs to the VPS35 family. Component of the retromer complex which consists of VPS29 (MAG1), VPS26 (VPS26A or VPS26B), VPS35 (VPS35A or VPS35B or VPS35C), VPS5/17 (SNX1 or SNX2A or SNX2B). Component of a retromer subcomplex consisting of VPS29 (MAG1), VPS26 (VPS26A or VPS26B), VPS35 (VPS35A or VPS35B or VPS35C). Interacts with RABG3F.

The protein resides in the cytoplasm. It localises to the endosome membrane. The protein localises to the prevacuolar compartment membrane. It is found in the golgi apparatus. Its subcellular location is the trans-Golgi network membrane. Plays a role in vesicular protein sorting. Component of the membrane-associated retromer complex which is essential in endosome-to-Golgi retrograde transport. Also involved in the efficient sorting of seed storage proteins. Binds alone to endosomal membranes and is required for recruitment of VPS26 and VPS29 to membrane. The VPS29-VPS26-VPS35 subcomplex may be involved in recycling of specific cargos from endosome to the plasma membrane. In Arabidopsis thaliana (Mouse-ear cress), this protein is Vacuolar protein sorting-associated protein 35A (VPS35A).